The primary structure comprises 384 residues: Lipid-A-disaccharide synthase (384 aa).

The protein belongs to the LpxB family.

It catalyses the reaction a lipid X + a UDP-2-N,3-O-bis[(3R)-3-hydroxyacyl]-alpha-D-glucosamine = a lipid A disaccharide + UDP + H(+). It functions in the pathway bacterial outer membrane biogenesis; LPS lipid A biosynthesis. Its function is as follows. Condensation of UDP-2,3-diacylglucosamine and 2,3-diacylglucosamine-1-phosphate to form lipid A disaccharide, a precursor of lipid A, a phosphorylated glycolipid that anchors the lipopolysaccharide to the outer membrane of the cell. This chain is Lipid-A-disaccharide synthase, found in Neisseria meningitidis serogroup C / serotype 2a (strain ATCC 700532 / DSM 15464 / FAM18).